A 323-amino-acid polypeptide reads, in one-letter code: Beta-ketoacyl-[acyl-carrier-protein] synthase III (323 aa).

Active-site residues include C113 and H250. The tract at residues 251-255 is ACP-binding; sequence QANKR. N280 is an active-site residue.

The protein belongs to the thiolase-like superfamily. FabH family. Homodimer.

It localises to the cytoplasm. The catalysed reaction is malonyl-[ACP] + acetyl-CoA + H(+) = 3-oxobutanoyl-[ACP] + CO2 + CoA. It participates in lipid metabolism; fatty acid biosynthesis. Its function is as follows. Catalyzes the condensation reaction of fatty acid synthesis by the addition to an acyl acceptor of two carbons from malonyl-ACP. Catalyzes the first condensation reaction which initiates fatty acid synthesis and may therefore play a role in governing the total rate of fatty acid production. Possesses both acetoacetyl-ACP synthase and acetyl transacylase activities. Its substrate specificity determines the biosynthesis of branched-chain and/or straight-chain of fatty acids. In Mesorhizobium japonicum (strain LMG 29417 / CECT 9101 / MAFF 303099) (Mesorhizobium loti (strain MAFF 303099)), this protein is Beta-ketoacyl-[acyl-carrier-protein] synthase III.